The chain runs to 195 residues: Apoptosis-associated speck-like protein containing a CARD (195 aa).

Positions Met-1 to Gln-91 constitute a Pyrin domain. Residues Lys-55 and Lys-174 each participate in a glycyl lysine isopeptide (Lys-Gly) (interchain with G-Cter in ubiquitin) cross-link. Residues Ala-107 to Ser-195 enclose the CARD domain. Phosphoserine is present on Ser-195.

Self-associates; enforced oligomerization induces apoptosis, NF-kappa-B regulation and interleukin-1 beta secretion. Homooligomers can form disk-like particles of approximately 12 nm diameter and approximately 1 nm height. Next to isoform 1, also isoform 2 and isoform 3 may be involved in oligomerization leading to functional regulation. Component of several inflammasomes containing one pattern recognition receptor/sensor, such as NLRP1, NLRP2, NLRP3, NLRP6, NLRC4, AIM2, MEFV or NOD2, and probably NLRC4, NLRP12 or IFI16. Major component of the ASC pyroptosome, a 1-2 um supramolecular assembly (one per macrophage cell) which consists of oligomerized PYCARD dimers and CASP1. Interacts with CASP1 (precursor form); the interaction induces activation of CASP1 leading to the processing of interleukin-1 beta; PYCARD competes with RIPK2 for binding to CASP1. Interacts with NLRP3; the interaction requires the homooligomerization of NLRP3. Interacts with NLRP2, NLRC4, MEFV, CARD16, AIM2, IFI16, NOD2, RIGI, RIPK2, PYDC1, PYDC2, NLRP10, CASP8, CHUK, IKBKB and BAX. Component of the AIM2 PANoptosome complex, a multiprotein complex that drives inflammatory cell death (PANoptosis). In terms of processing, phosphorylated. Post-translationally, 'Lys-63'-linked polyubiquitination by TRAF3 is critical for speck formation and inflammasome activation. 'Lys-63'-linked deubiquitinated by USP50; a crucial step for NLRP3-mediated inflammasome activation. 'Lys-63'-linked polyubiquitination by PELI1 is also critical for speck formation and inflammasome activation. Deubiquitinated by USP3 that cleaves 'Lys-48'-linked ubiquitin chains and strengthens its stability by blocking proteasomal degradation. In terms of tissue distribution, widely expressed at low levels. Detected in peripheral blood leukocytes, lung, small intestine, spleen, thymus, colon and at lower levels in placenta, liver and kidney. Very low expression in skeletal muscle, heart and brain. Expressed in lung epithelial cells (at protein level). Detected in the leukemia cell lines HL-60 and U-937, but not in Jurkat T-cell lymphoma and Daudi Burkitt's lymphoma. Detected in the melanoma cell line WM35, but not in WM793. Not detected in HeLa cervical carcinoma cells and MOLT-4 lymphocytic leukemia cells.

It is found in the cytoplasm. The protein resides in the inflammasome. It localises to the endoplasmic reticulum. Its subcellular location is the mitochondrion. The protein localises to the nucleus. It is found in the golgi apparatus membrane. In terms of biological role, functions as a key mediator in apoptosis and inflammation. Promotes caspase-mediated apoptosis involving predominantly caspase-8 and also caspase-9 in a probable cell type-specific manner. Involved in activation of the mitochondrial apoptotic pathway, promotes caspase-8-dependent proteolytic maturation of BID independently of FADD in certain cell types and also mediates mitochondrial translocation of BAX and activates BAX-dependent apoptosis coupled to activation of caspase-9, -2 and -3. Involved in innate immune response by acting as an integral adapter in the assembly of various inflammasomes (NLRP1, NLRP2, NLRP3, NLRP6, AIM2 and probably IFI16) which recruit and activate caspase-1 leading to processing and secretion of pro-inflammatory cytokines. Caspase-1-dependent inflammation leads to macrophage pyroptosis, a form of cell death. The function as activating adapter in different types of inflammasomes is mediated by the pyrin and CARD domains and their homotypic interactions. Clustered PYCARD nucleates the formation of caspase-1 filaments through the interaction of their respective CARD domains, acting as a platform for of caspase-1 polymerization. In the NLRP1 and NLRC4 inflammasomes seems not be required but facilitates the processing of procaspase-1. In cooperation with NOD2 involved in an inflammasome activated by bacterial muramyl dipeptide leading to caspase-1 activation. May be involved in RIGI-triggered pro-inflammatory responses and inflammasome activation. In collaboration with AIM2 which detects cytosolic double-stranded DNA may also be involved in a caspase-1-independent cell death that involves caspase-8. In adaptive immunity may be involved in maturation of dendritic cells to stimulate T-cell immunity and in cytoskeletal rearrangements coupled to chemotaxis and antigen uptake may be involved in post-transcriptional regulation of the guanine nucleotide exchange factor DOCK2; the latter function is proposed to involve the nuclear form. Also involved in transcriptional activation of cytokines and chemokines independent of the inflammasome; this function may involve AP-1, NF-kappa-B, MAPK and caspase-8 signaling pathways. For regulation of NF-kappa-B activating and inhibiting functions have been reported. Modulates NF-kappa-B induction at the level of the IKK complex by inhibiting kinase activity of CHUK and IKBK. Proposed to compete with RIPK2 for association with CASP1 thereby down-regulating CASP1-mediated RIPK2-dependent NF-kappa-B activation and activating interleukin-1 beta processing. Modulates host resistance to DNA virus infection, probably by inducing the cleavage of and inactivating CGAS in presence of cytoplasmic double-stranded DNA. Functionally, may have a regulating effect on the function as inflammasome adapter. Its function is as follows. Seems to inhibit inflammasome-mediated maturation of interleukin-1 beta. The polypeptide is Apoptosis-associated speck-like protein containing a CARD (Homo sapiens (Human)).